A 689-amino-acid polypeptide reads, in one-letter code: Glycine--tRNA ligase beta subunit (689 aa).

It belongs to the class-II aminoacyl-tRNA synthetase family. As to quaternary structure, tetramer of two alpha and two beta subunits.

The protein resides in the cytoplasm. It catalyses the reaction tRNA(Gly) + glycine + ATP = glycyl-tRNA(Gly) + AMP + diphosphate. This Glaesserella parasuis serovar 5 (strain SH0165) (Haemophilus parasuis) protein is Glycine--tRNA ligase beta subunit.